Reading from the N-terminus, the 64-residue chain is Prokaryotic ubiquitin-like protein Pup (64 aa).

Positions 20–58 (QELTLAASHVVSDVSEVDDLLDEIDGLLAENAEDFVTGF) are ARC ATPase binding. Residue Glu64 forms an Isoglutamyl lysine isopeptide (Glu-Lys) (interchain with K-? in acceptor proteins) linkage.

The protein belongs to the prokaryotic ubiquitin-like protein family. Strongly interacts with the proteasome-associated ATPase ARC through a hydrophobic interface; the interacting region of Pup lies in its C-terminal half. There is one Pup binding site per ARC hexamer ring.

Its pathway is protein degradation; proteasomal Pup-dependent pathway. Its function is as follows. Protein modifier that is covalently attached to lysine residues of substrate proteins, thereby targeting them for proteasomal degradation. The tagging system is termed pupylation. This is Prokaryotic ubiquitin-like protein Pup from Rothia mucilaginosa (strain DY-18) (Stomatococcus mucilaginosus).